The sequence spans 103 residues: MQPNDITFFQRFQDDILAGRKTITIRDESESHFKTGDVLRVGRFEDDGYFCTIEVTATSTVTLDTLTEKHAQQENMTLPELKKVIADIYPGQTQFYVIEFKCL.

One can recognise an ASCH domain in the interval Ile-6–Lys-101. Lys-21 (proton acceptor) is an active-site residue. Thr-24 (nucleophile) is an active-site residue. Catalysis depends on Glu-74, which acts as the Proton donor.

This sequence belongs to the N(4)-acetylcytidine amidohydrolase family.

The catalysed reaction is N(4)-acetylcytidine + H2O = cytidine + acetate + H(+). It catalyses the reaction N(4)-acetyl-2'-deoxycytidine + H2O = 2'-deoxycytidine + acetate + H(+). The enzyme catalyses N(4)-acetylcytosine + H2O = cytosine + acetate + H(+). In terms of biological role, catalyzes the hydrolysis of N(4)-acetylcytidine (ac4C). The protein is N(4)-acetylcytidine amidohydrolase (yqfB) of Escherichia fergusonii (strain ATCC 35469 / DSM 13698 / CCUG 18766 / IAM 14443 / JCM 21226 / LMG 7866 / NBRC 102419 / NCTC 12128 / CDC 0568-73).